The following is a 506-amino-acid chain: Zinc finger and SCAN domain containing protein 4F (506 aa).

The interval 1–24 is disordered; it reads MASQQAPAKDLQTNNLEFTPTDSS. Residues 37–119 enclose the SCAN box domain; sequence SAQLNFSPSN…RFMESLTDEC (83 aa). C2H2-type zinc fingers lie at residues 395–417, 424–446, 452–474, and 480–503; these read YKCEECSRMFKHARSLSSHQRTH, LLCVTCQKMFKRVSDRRTHEIIH, FKCSTCEKSFSHKTNLKSHEMIH, and YVCSLCSRRFRQSSTYHRHLRNYH.

As to expression, up-regulated in blastocyst outgrowths and is detectable in a mosaic fashion in ES cultures.

It is found in the nucleus. The protein localises to the chromosome. It localises to the telomere. Transcription factor required to regulate early development. Binds telomeres and plays a key role in genomic stability by regulating telomere elongation. Acts as an activator of spontaneous telomere sister chromatid exchange (T-SCE) and telomere elongation. This chain is Zinc finger and SCAN domain containing protein 4F (Zscan4f), found in Mus musculus (Mouse).